The chain runs to 367 residues: Uptake hydrogenase small subunit (367 aa).

Positions 1-45 (MTPTETFYEVMRRQGVTRRSFLKFCSLTATALGLGPAYTSEIAHA) form a signal peptide, tat-type signal. 8 residues coordinate [4Fe-4S] cluster: C62, C65, C160, C194, H232, C235, C260, and C266. Residues C275, C294, and C297 each coordinate [3Fe-4S] cluster.

This sequence belongs to the [NiFe]/[NiFeSe] hydrogenase small subunit family. Heterodimer of a large and a small subunit. The cofactor is [4Fe-4S] cluster. Requires [3Fe-4S] cluster as cofactor. In terms of processing, predicted to be exported by the Tat system. The position of the signal peptide cleavage has been experimentally proven.

The protein localises to the cell membrane. The catalysed reaction is H2 + A = AH2. This enzyme recycles the H(2) produced by nitrogenase to increase the production of ATP and to protect nitrogenase against inhibition or damage by O(2) under carbon- or phosphate-limited conditions. This chain is Uptake hydrogenase small subunit (hoxS), found in Afipia carboxidovorans (strain ATCC 49405 / DSM 1227 / KCTC 32145 / OM5) (Oligotropha carboxidovorans).